Reading from the N-terminus, the 347-residue chain is Quinolinate synthase (347 aa).

Iminosuccinate contacts are provided by H47 and S68. C113 is a binding site for [4Fe-4S] cluster. Iminosuccinate is bound by residues 139–141 (YAN) and S156. C200 lines the [4Fe-4S] cluster pocket. Iminosuccinate contacts are provided by residues 226-228 (HPE) and T243. C297 is a [4Fe-4S] cluster binding site.

It belongs to the quinolinate synthase family. Type 1 subfamily. Requires [4Fe-4S] cluster as cofactor.

The protein localises to the cytoplasm. It carries out the reaction iminosuccinate + dihydroxyacetone phosphate = quinolinate + phosphate + 2 H2O + H(+). The protein operates within cofactor biosynthesis; NAD(+) biosynthesis; quinolinate from iminoaspartate: step 1/1. In terms of biological role, catalyzes the condensation of iminoaspartate with dihydroxyacetone phosphate to form quinolinate. This is Quinolinate synthase from Escherichia coli (strain K12 / MC4100 / BW2952).